Consider the following 175-residue polypeptide: Large ribosomal subunit protein uL6 (175 aa).

Belongs to the universal ribosomal protein uL6 family. In terms of assembly, part of the 50S ribosomal subunit.

Its function is as follows. This protein binds to the 23S rRNA, and is important in its secondary structure. It is located near the subunit interface in the base of the L7/L12 stalk, and near the tRNA binding site of the peptidyltransferase center. This chain is Large ribosomal subunit protein uL6, found in Xylella fastidiosa (strain 9a5c).